A 549-amino-acid polypeptide reads, in one-letter code: Phosphoenolpyruvate carboxykinase (ATP) (549 aa).

Residue 250–257 participates in ATP binding; the sequence is GLSGTGKT.

It belongs to the phosphoenolpyruvate carboxykinase (ATP) family. Homotetramer.

The enzyme catalyses oxaloacetate + ATP = phosphoenolpyruvate + ADP + CO2. The protein operates within carbohydrate biosynthesis; gluconeogenesis. The polypeptide is Phosphoenolpyruvate carboxykinase (ATP) (PCK1) (Saccharomyces cerevisiae (strain ATCC 204508 / S288c) (Baker's yeast)).